A 364-amino-acid polypeptide reads, in one-letter code: Autophagy-related protein 5 (364 aa).

The span at 1 to 13 shows a compositional bias: polar residues; it reads MASPNPYSYSPQL. Residues 1–103 are disordered; the sequence is MASPNPYSYS…SLPPKPKPSS (103 aa). A compositionally biased stretch (low complexity) spans 28-42; it reads SSPSFRSTPFRSSRG. Over residues 43–53 the composition is skewed to gly residues; it reads TGAGTGIGLGL. The span at 72-82 shows a compositional bias: basic and acidic residues; the sequence is RSGDGSHDDLP. K202 participates in a covalent cross-link: Glycyl lysine isopeptide (Lys-Gly) (interchain with G-Cter in ATG12). Residues 262-306 form a disordered region; sequence PSSPSPPSSDQQQPQRPGGSSSSGSYRVMQTLVPPRGPNNRTPQT. The segment covering 269 to 286 has biased composition (low complexity); sequence SSDQQQPQRPGGSSSSGS.

This sequence belongs to the ATG5 family. Conjugated with atg12. In terms of processing, conjugated to atg12; which is essential for autophagy.

The protein localises to the preautophagosomal structure membrane. In terms of biological role, involved in cytoplasm to vacuole transport (Cvt) and autophagic vesicle formation. Autophagy is essential for maintenance of amino acid levels and protein synthesis under nitrogen starvation. Required for selective autophagic degradation of the nucleus (nucleophagy). Also required for mitophagy, which eliminates defective or superfluous mitochondria in order to fulfill cellular energy requirements and prevent excess ROS production. Conjugation with atg12, through a ubiquitin-like conjugating system involving apg-5/atg7 as an E1-like activating enzyme and atg10 as an E2-like conjugating enzyme, is essential for its function. The atg12-apg-4/atg5 conjugate acts as an E3-like enzyme which is required for lipidation of apg-6/atg8 and apg-6/atg8 association to the vesicle membranes. In Neurospora crassa (strain ATCC 24698 / 74-OR23-1A / CBS 708.71 / DSM 1257 / FGSC 987), this protein is Autophagy-related protein 5 (apg-4).